The primary structure comprises 323 residues: Methionyl-tRNA formyltransferase (323 aa).

A (6S)-5,6,7,8-tetrahydrofolate-binding site is contributed by 115–118 (SLLP).

Belongs to the Fmt family.

The catalysed reaction is L-methionyl-tRNA(fMet) + (6R)-10-formyltetrahydrofolate = N-formyl-L-methionyl-tRNA(fMet) + (6S)-5,6,7,8-tetrahydrofolate + H(+). In terms of biological role, attaches a formyl group to the free amino group of methionyl-tRNA(fMet). The formyl group appears to play a dual role in the initiator identity of N-formylmethionyl-tRNA by promoting its recognition by IF2 and preventing the misappropriation of this tRNA by the elongation apparatus. In Lactococcus lactis subsp. cremoris (strain SK11), this protein is Methionyl-tRNA formyltransferase.